The following is a 140-amino-acid chain: Transcription antitermination protein NusB (140 aa).

Belongs to the NusB family.

Its function is as follows. Involved in transcription antitermination. Required for transcription of ribosomal RNA (rRNA) genes. Binds specifically to the boxA antiterminator sequence of the ribosomal RNA (rrn) operons. In Leptospira biflexa serovar Patoc (strain Patoc 1 / Ames), this protein is Transcription antitermination protein NusB.